Reading from the N-terminus, the 227-residue chain is UPF0173 metal-dependent hydrolase BT9727_4343 (227 aa).

This sequence belongs to the UPF0173 family.

The chain is UPF0173 metal-dependent hydrolase BT9727_4343 from Bacillus thuringiensis subsp. konkukian (strain 97-27).